Here is a 247-residue protein sequence, read N- to C-terminus: Probable transcriptional regulatory protein Asuc_1803 (247 aa).

It belongs to the TACO1 family.

The protein resides in the cytoplasm. This Actinobacillus succinogenes (strain ATCC 55618 / DSM 22257 / CCUG 43843 / 130Z) protein is Probable transcriptional regulatory protein Asuc_1803.